Reading from the N-terminus, the 382-residue chain is G2/mitotic-specific cyclin-B2 (382 aa).

A compositionally biased stretch (polar residues) spans M1 to L12. Residues M1 to I78 are disordered. Over residues N38 to R47 the composition is skewed to low complexity.

It belongs to the cyclin family. Cyclin AB subfamily. In terms of assembly, interacts with the CDK1 protein kinase to form a serine/threonine kinase holoenzyme complex also known as maturation promoting factor (MPF). The cyclin subunit imparts substrate specificity to the complex.

Essential for the control of the cell cycle at the G2/M (mitosis) transition. The sequence is that of G2/mitotic-specific cyclin-B2 (ccnb2) from Oryzias javanicus (Javanese ricefish).